The chain runs to 168 residues: 2-C-methyl-D-erythritol 2,4-cyclodiphosphate synthase (168 aa).

Positions 11 and 13 each coordinate a divalent metal cation. Residues 11 to 13 and 38 to 39 contribute to the 4-CDP-2-C-methyl-D-erythritol 2-phosphate site; these read DVH and HS. His46 lines the a divalent metal cation pocket. Residues 60 to 62, 133 to 136, Phe140, and Arg143 each bind 4-CDP-2-C-methyl-D-erythritol 2-phosphate; these read DIG and TTTD.

The protein belongs to the IspF family. Homotrimer. Requires a divalent metal cation as cofactor.

The catalysed reaction is 4-CDP-2-C-methyl-D-erythritol 2-phosphate = 2-C-methyl-D-erythritol 2,4-cyclic diphosphate + CMP. It functions in the pathway isoprenoid biosynthesis; isopentenyl diphosphate biosynthesis via DXP pathway; isopentenyl diphosphate from 1-deoxy-D-xylulose 5-phosphate: step 4/6. Functionally, involved in the biosynthesis of isopentenyl diphosphate (IPP) and dimethylallyl diphosphate (DMAPP), two major building blocks of isoprenoid compounds. Catalyzes the conversion of 4-diphosphocytidyl-2-C-methyl-D-erythritol 2-phosphate (CDP-ME2P) to 2-C-methyl-D-erythritol 2,4-cyclodiphosphate (ME-CPP) with a corresponding release of cytidine 5-monophosphate (CMP). In Cutibacterium acnes (strain DSM 16379 / KPA171202) (Propionibacterium acnes), this protein is 2-C-methyl-D-erythritol 2,4-cyclodiphosphate synthase.